The primary structure comprises 382 residues: Beta-lactamase CMY-1 (382 aa).

Residues 1-23 (MQQRQSILWGAVATLMWAGLAHA) form the signal peptide. The active-site Acyl-ester intermediate is S88. A beta-lactam is bound by residues S88, Q144, Y174, N176, and N363.

The protein belongs to the class-C beta-lactamase family.

It carries out the reaction a beta-lactam + H2O = a substituted beta-amino acid. Its activity is regulated as follows. Inhibited by the beta-lactamase-blocking agent sulbactam. Functionally, class C beta-lactamase which confers resistance to penicillins and cephalosporins. Has benzylpenicillin- and cefalotin-hydrolyzing activities. Has weak cefuroxime, cefotaxime, cefoxitin, imipenem and oxacillin-hydrolyzing activities. This chain is Beta-lactamase CMY-1, found in Klebsiella pneumoniae.